We begin with the raw amino-acid sequence, 546 residues long: NAD(P)H-quinone oxidoreductase chain 4 (546 aa).

A run of 14 helical transmembrane segments spans residues 24 to 44, 56 to 76, 106 to 126, 132 to 152, 156 to 176, 188 to 208, 232 to 252, 263 to 283, 297 to 317, 326 to 346, 352 to 372, 396 to 416, 437 to 457, and 484 to 504; these read FPWLSISILFPIASAFLIPFF, FALSVALITFLVTVGAYINGF, ISMPLILLTSFITALAVLAAW, PKLFFFLILIMDGGQIAVFAV, LLFFLTWELELLPVYLLLAIW, FIIYTAGSSIFILLAALAMGF, ILCYIGLLIAFGVKLPIVPLH, TAPVHMLLAGILLKMGGYALL, FAPLLIVLGVVNIIYAALTSF, IAYSSISHMGFVLIGIGSFSS, AMLQMVSHGLIGASLFFLVGA, FALWTACSLASLALPGMSGFV, VVMASLAAVGVILTPIYLLSM, and VYIIACLLLPIIGIGLYPRLV.

Belongs to the complex I subunit 4 family.

The protein resides in the cellular thylakoid membrane. It catalyses the reaction a plastoquinone + NADH + (n+1) H(+)(in) = a plastoquinol + NAD(+) + n H(+)(out). It carries out the reaction a plastoquinone + NADPH + (n+1) H(+)(in) = a plastoquinol + NADP(+) + n H(+)(out). In terms of biological role, NDH-1 shuttles electrons from NAD(P)H, via FMN and iron-sulfur (Fe-S) centers, to quinones in the respiratory chain. The immediate electron acceptor for the enzyme in this species is believed to be plastoquinone. Couples the redox reaction to proton translocation (for every two electrons transferred, four hydrogen ions are translocated across the cytoplasmic membrane), and thus conserves the redox energy in a proton gradient. The chain is NAD(P)H-quinone oxidoreductase chain 4 from Prochlorococcus marinus (strain MIT 9515).